Here is an 83-residue protein sequence, read N- to C-terminus: MKTLLLTLVVVTIVCLDLGYTMTCCNQQSSQPKTTTICAGGESSCYKKTWSDHRGSRTERGCGCPHVKPGIKLTCCKTDECNN.

The signal sequence occupies residues 1–21 (MKTLLLTLVVVTIVCLDLGYT). 4 disulfide bridges follow: C24-C45, C38-C62, C64-C75, and C76-C81.

The protein belongs to the three-finger toxin family. Short-chain subfamily. Type I alpha-neurotoxin sub-subfamily. Expressed by the venom gland.

The protein resides in the secreted. In terms of biological role, binds to muscle nicotinic acetylcholine receptor (nAChR) and inhibit acetylcholine from binding to the receptor, thereby impairing neuromuscular transmission. The protein is Short neurotoxin 1 of Pseudechis australis (Mulga snake).